The chain runs to 265 residues: uncharacterized protein (265 aa).

This is an uncharacterized protein from Saccharolobus islandicus (Sulfolobus islandicus).